A 343-amino-acid polypeptide reads, in one-letter code: Undecaprenyl-diphosphatase 2 (343 aa).

Helical transmembrane passes span 21 to 41 (LFPVSSLGHSVLIPALIGGSW), 57 to 77 (PYLTFVVGLHVATAVALLVFF), 104 to 124 (LAWLIVAATVPVGIIGLALEH), and 129 to 149 (LFAKPLAAALFLTANGMILLA). The segment covering 179 to 193 (VPAPATVPTQTTSAP) has biased composition (low complexity). Residues 179-202 (VPAPATVPTQTTSAPGGRATARHT) are disordered. A run of 4 helical transmembrane segments spans residues 225 to 245 (AGVIGLFQTLALLAGISRSGI), 265 to 285 (FLLATPVILAAGLLKLPALAG), 294 to 314 (QVILGALIAGIAAYLSIRFLV), and 322 to 342 (LTPFAIYCLLTGALCTVRFAI).

This sequence belongs to the UppP family.

It is found in the cell membrane. The catalysed reaction is di-trans,octa-cis-undecaprenyl diphosphate + H2O = di-trans,octa-cis-undecaprenyl phosphate + phosphate + H(+). Functionally, catalyzes the dephosphorylation of undecaprenyl diphosphate (UPP). Confers resistance to bacitracin. This Frankia alni (strain DSM 45986 / CECT 9034 / ACN14a) protein is Undecaprenyl-diphosphatase 2.